The sequence spans 320 residues: Cytochrome c biogenesis protein CcsA (320 aa).

A run of 8 helical transmembrane segments spans residues 9-29 (ILIH…FLTL), 44-64 (GMIV…IYSG), 71-91 (LYES…VCYF), 99-119 (LNAI…SGLL), 144-164 (MVLG…LLVI), 226-246 (IISL…VWAN), 261-281 (WAFI…NINL), and 287-307 (AIVA…VNLL).

It belongs to the CcmF/CycK/Ccl1/NrfE/CcsA family. May interact with Ccs1.

The protein resides in the plastid. It is found in the chloroplast thylakoid membrane. Its function is as follows. Required during biogenesis of c-type cytochromes (cytochrome c6 and cytochrome f) at the step of heme attachment. This Carica papaya (Papaya) protein is Cytochrome c biogenesis protein CcsA.